Here is an 835-residue protein sequence, read N- to C-terminus: Protein VP3 (835 aa).

The segment at 171 to 245 (RKIKERMTTS…KHTIKLKQEK (75 aa)) is N7-methyltransferase activity. A 2'-O-methyltransferase activity region spans residues 246–428 (WLGKRVSQFD…INIKRFIPKG (183 aa)). The interval 429 to 555 (VFYAFINNIT…NHLFIINGTD (127 aa)) is N7-methyltransferase activity. Residues 556-692 (KYYKLDQYAN…EYINKVYSIT (137 aa)) are GTase/RTPase activity. The tract at residues 693 to 835 (YADDPNYFIG…KGETVFDMSE (143 aa)) is 2'-5'-phosphodiesterase activity. Catalysis depends on for 2'-5'-phosphodiesterase activity residues H718, T720, H797, and T799.

It belongs to the rotavirus VP3 family. In terms of assembly, interacts with VP1. Interacts with VP2.

It localises to the virion. It catalyses the reaction a 5'-end diphospho-ribonucleoside in mRNA + GTP + H(+) = a 5'-end (5'-triphosphoguanosine)-ribonucleoside in mRNA + diphosphate. The enzyme catalyses a 5'-end (5'-triphosphoguanosine)-ribonucleoside in mRNA + S-adenosyl-L-methionine = a 5'-end (N(7)-methyl 5'-triphosphoguanosine)-ribonucleoside in mRNA + S-adenosyl-L-homocysteine. It carries out the reaction 5'-triphosphoadenylyl-(2'-&gt;5')-adenylyl-(2'-&gt;5')-adenosine + 2 H2O = 2 AMP + ATP + 2 H(+). Functionally, multifunctional enzyme involved in mRNA capping. Catalyzes the formation of the 5' cap structure on the viral plus-strand transcripts. Specifically binds to GTP and displays guanylyltransferase and methyltransferase activities. Has affinity for ssRNA but not for dsRNA. Capping activity is non-specific and caps RNAs that initiate with either a G or an A residue. Together with VP1 polymerase, forms a VP1-VP3 complex positioned near the channels situated at each of the five-fold vertices of the core. Following infection, the outermost layer of the virus is lost, leaving a double-layered particle (DLP) made up of the core and VP6 shell. VP1 then catalyzes the transcription of fully conservative plus-strand genomic RNAs that are capped by VP3 and extruded through the DLP's channels into the cytoplasm where they function as mRNAs for translation of viral proteins. DLPs probably have an RNA triphosphatase activity as well, whereas open cores do not. Its function is as follows. Counteracts the host innate immune response thanks to its phosphodiesterase that degrades the 5'-triphosphorylated, 2'-5' linked adenylate oligomers produced by the host cell IFN-inducible 2',5'-oligoadenylate synthetase (OAS). The host RNaseL is therefore not activated. In Homo sapiens (Human), this protein is Protein VP3.